We begin with the raw amino-acid sequence, 362 residues long: Heat-inducible transcription repressor HrcA (362 aa).

This sequence belongs to the HrcA family.

Its function is as follows. Negative regulator of class I heat shock genes (grpE-dnaK-dnaJ and groELS operons). Prevents heat-shock induction of these operons. In Bradyrhizobium sp. (strain ORS 278), this protein is Heat-inducible transcription repressor HrcA.